We begin with the raw amino-acid sequence, 202 residues long: Mevalonate-3-phosphate 5-kinase (202 aa).

The catalysed reaction is (R)-3-phosphomevalonate + ATP = (R)-3,5-bisphosphomevalonate + ADP + H(+). It functions in the pathway isoprenoid biosynthesis; isopentenyl diphosphate biosynthesis via mevalonate pathway. Phosphorylates mevalonate 3-phosphate to form mevalonate 3,5-bisphosphate. Functions in an alternative mevalonate pathway, only present in extreme acidophiles of the Thermoplasmatales order, which passes through mevalonate 3-phosphate rather than mevalonate 5-phosphate. This is Mevalonate-3-phosphate 5-kinase from Thermoplasma acidophilum (strain ATCC 25905 / DSM 1728 / JCM 9062 / NBRC 15155 / AMRC-C165).